We begin with the raw amino-acid sequence, 903 residues long: Translation initiation factor IF-2 (903 aa).

Residues 66 to 296 (QATLKGEGPV…GRSRKREMEN (231 aa)) form a disordered region. Residues 121-132 (NTDETRVQEHKP) are compositionally biased toward basic and acidic residues. Low complexity-rich tracts occupy residues 139-152 (AGDA…AAAG) and 178-195 (AATG…GQQS). Residues 204–231 (EGRSRQDENKGSAREDQANRFATRDKEA) show a composition bias toward basic and acidic residues. Basic residues predominate over residues 246–255 (RRPAHSKPLR). Composition is skewed to basic and acidic residues over residues 263–276 (VTKD…DRSN) and 285–296 (ESGRSRKREMEN). The tr-type G domain occupies 403 to 572 (ERPPVVTVMG…LLTADVAELK (170 aa)). A G1 region spans residues 412-419 (GHVDHGKT). GTP is bound at residue 412–419 (GHVDHGKT). Residues 437–441 (GITQH) form a G2 region. The G3 stretch occupies residues 458–461 (DTPG). GTP-binding positions include 458-462 (DTPGH) and 512-515 (NKID). A G4 region spans residues 512–515 (NKID). A G5 region spans residues 548–550 (SAV).

This sequence belongs to the TRAFAC class translation factor GTPase superfamily. Classic translation factor GTPase family. IF-2 subfamily.

The protein resides in the cytoplasm. In terms of biological role, one of the essential components for the initiation of protein synthesis. Protects formylmethionyl-tRNA from spontaneous hydrolysis and promotes its binding to the 30S ribosomal subunits. Also involved in the hydrolysis of GTP during the formation of the 70S ribosomal complex. This is Translation initiation factor IF-2 from Moorella thermoacetica (strain ATCC 39073 / JCM 9320).